Reading from the N-terminus, the 519-residue chain is Glycerophosphoinositol permease 1 (519 aa).

The segment at 1–32 (MSDLVKSSEVIETTEVPPHNNNNNKRHFKYDS) is disordered. A helical transmembrane segment spans residues 39 to 59 (LAGGVKLKDALMILCAGFALI). Residue Asn-93 is glycosylated (N-linked (GlcNAc...) asparagine). 3 helical membrane-spanning segments follow: residues 94–114 (ASLV…DYIG), 117–137 (WSIV…AASH), and 141–161 (VNGM…GIGA). The N-linked (GlcNAc...) asparagine glycan is linked to Asn-175. Helical transmembrane passes span 186–206 (ILAT…IFLI), 216–236 (DAIW…VFYF), 273–293 (VAWF…AGII), 313–333 (LLLG…VDIL), 337–357 (YTMM…GCGY), 363–383 (ITGL…FGPG), 404–424 (GISA…FSPI), and 432–452 (WTFI…FIFI). Acidic residues predominate over residues 487–500 (EEEDLEGSSEDSSD). The disordered stretch occupies residues 487-519 (EEEDLEGSSEDSSDGEIVKNNTKNDVEKVDALK). Asn-506 carries N-linked (GlcNAc...) asparagine glycosylation. Positions 508–519 (TKNDVEKVDALK) are enriched in basic and acidic residues.

It belongs to the major facilitator superfamily. Sugar transporter (TC 2.A.1.1) family.

Its subcellular location is the cell membrane. The catalysed reaction is sn-glycero-3-phospho-1D-myo-inositol(out) = sn-glycero-3-phospho-1D-myo-inositol(in). In terms of biological role, glycerophosphodiester transporter that mediates uptake of glycerophosphoinositol (GroPIns) as a source of inositol and phosphate. Does not possess detectable glycerophosphocholine (GroPCho) transport activity. Although no glycerophosphoinositol transport activity occurs in the absence of GIT1, C.albicans is still able to use glycerophosphoinositol as a phosphate source at pH 7.5, albeit slowly. Thus, a second, GIT1-independent, mechanism must exist for utilizing glycerophosphoinositol as a phosphate source at physiological pH. The expanded ability to utilize GroPIns and GroPCho results from the organism's pathogenic nature and its need to occupy a variety of environments within its host organism. This possibility is buttressed by the fact that GroPIns and GroPCho are present and abundant in human fluids. In Candida albicans (strain SC5314 / ATCC MYA-2876) (Yeast), this protein is Glycerophosphoinositol permease 1.